We begin with the raw amino-acid sequence, 281 residues long: Glyoxalase 1 (281 aa).

2 consecutive VOC domains span residues 4–127 and 132–251; these read RALH…IGKA and KVLR…FVGD.

The protein belongs to the glyoxalase I family. In terms of tissue distribution, expressed in the following tissues in both larvae and adults: pharynx, pharyngeal-intestinal valve, intestine, anal sphincter, vulval muscle, seam cells and the nervous system.

Functionally, thought to act as a glyoxalase. May remove methylglyoxal from mitochondrial proteins. Has roles in reducing oxidative stress and increasing lifespan. This chain is Glyoxalase 1 (glod-4), found in Caenorhabditis elegans.